Here is a 254-residue protein sequence, read N- to C-terminus: 4-hydroxy-tetrahydrodipicolinate reductase (254 aa).

NAD(+) is bound at residue 7 to 12; it reads GASGRI. Arg35 contacts NADP(+). NAD(+) is bound by residues 91 to 93 and 115 to 118; these read GTT and AHNM. The active-site Proton donor/acceptor is the His147. His148 is a (S)-2,3,4,5-tetrahydrodipicolinate binding site. Lys151 serves as the catalytic Proton donor. 157 to 158 lines the (S)-2,3,4,5-tetrahydrodipicolinate pocket; that stretch reads GT.

It belongs to the DapB family.

The protein resides in the cytoplasm. The catalysed reaction is (S)-2,3,4,5-tetrahydrodipicolinate + NAD(+) + H2O = (2S,4S)-4-hydroxy-2,3,4,5-tetrahydrodipicolinate + NADH + H(+). The enzyme catalyses (S)-2,3,4,5-tetrahydrodipicolinate + NADP(+) + H2O = (2S,4S)-4-hydroxy-2,3,4,5-tetrahydrodipicolinate + NADPH + H(+). Its pathway is amino-acid biosynthesis; L-lysine biosynthesis via DAP pathway; (S)-tetrahydrodipicolinate from L-aspartate: step 4/4. Catalyzes the conversion of 4-hydroxy-tetrahydrodipicolinate (HTPA) to tetrahydrodipicolinate. The chain is 4-hydroxy-tetrahydrodipicolinate reductase from Helicobacter pylori (strain G27).